Reading from the N-terminus, the 84-residue chain is NADH dehydrogenase [ubiquinone] 1 alpha subcomplex subunit 3 (84 aa).

A2 bears the N-acetylalanine mark. The chain crosses the membrane as a helical span at residues 19 to 39; that stretch reads LVVSFSVWGLAIIMPMISPYT. The interval 59–84 is disordered; that stretch reads DDGNMPDVPSHPQDPLGPSLDWLKNL.

This sequence belongs to the complex I NDUFA3 subunit family. As to quaternary structure, complex I is composed of 45 different subunits.

Its subcellular location is the mitochondrion inner membrane. Functionally, accessory subunit of the mitochondrial membrane respiratory chain NADH dehydrogenase (Complex I), that is believed not to be involved in catalysis. Complex I functions in the transfer of electrons from NADH to the respiratory chain. The immediate electron acceptor for the enzyme is believed to be ubiquinone. The chain is NADH dehydrogenase [ubiquinone] 1 alpha subcomplex subunit 3 (Ndufa3) from Mus musculus (Mouse).